The sequence spans 257 residues: Protein orai-2 (257 aa).

4 helical membrane passes run 62–79, 94–114, 156–176, and 201–221; these read ASSR…VAMV, LIAF…ALLI, LGIL…FLPI, and LVST…TIHF.

Belongs to the Orai family.

Its subcellular location is the membrane. Ca(2+) release-activated Ca(2+)-like (CRAC-like) channel subunit which mediates Ca(2+) influx and increase in Ca(2+)-selective current by synergy with the Ca(2+) sensor, stim1. In Xenopus laevis (African clawed frog), this protein is Protein orai-2 (orai2).